We begin with the raw amino-acid sequence, 534 residues long: MDNIYIKQALVLKEVKHVFQKLIGEDPMESMYMVDTIQRLGIEHHFEEEIEAALQKQHLIFSSHLSDFANNHKLCEVALPFRLLRQRGHYVLADVFDNLKSNKKEFREKHGEDVKGLISLYEATQLGIEGEDSLDDAGYLCHQLLHAWLTRHEEHNEAMYVAKTLQHPLHYDLSRFRDDTSILLNDFKTKREWECLEELAEINSSIVRFVNQNEITQVYKWWKDLGLNNEVKFARYQPLKWYMWPMACFTDPRFSEQRIELTKPISLVYIIDDIFDVYGTLDQLTLFTDAIKRWELASTEQLPDFMKMCLRVLYEITNDFAEKIYKKHGFNPIETLKRSWVRLLNAFLEEAHWLNSGHLPRSAEYLNNGIVSTGVHVVLVHSFFLMDYSINNEIVAIVDNVPQIIHSVAKILRLSDDLEGAKSEDQNGLDGSYIDCYMNEHQDVSAEDAQRHVAHLISCEWKRLNREILTQNQLPSSFTNFCLNAARMVPLMYHYRSNPGLSTLQEHVKLLSNNAVAGAERHVVHILCLQFVIE.

Residues D272, D276, D416, and E424 each coordinate Mg(2+). The short motif at 272 to 276 (DDIFD) is the DDXXD motif element.

It belongs to the terpene synthase family. It depends on Mg(2+) as a cofactor.

Its subcellular location is the plastid. The protein localises to the chloroplast. The catalysed reaction is neryl diphosphate + H2O = nerol + diphosphate. It functions in the pathway secondary metabolite biosynthesis; terpenoid biosynthesis. Functionally, monoterpene synthase that catalyzes the hydrolysis of neryl diphosphate (NPP) to form nerol and diphosphate. Is specific for NPP and has no hydrolase activity toward geranyl diphosphate (GPP) or farnesyl diphosphate (FPP). The monoterpene nerol may have an insect repellent effect for the plant leaves. This chain is Neryl diphosphate diphosphatase, chloroplastic, found in Glycine max (Soybean).